Here is a 359-residue protein sequence, read N- to C-terminus: 4-galactosyl-N-acetylglucosaminide 3-alpha-L-fucosyltransferase 9 (359 aa).

The Cytoplasmic segment spans residues 1 to 11; it reads MTSASKGILRP. The chain crosses the membrane as a helical; Signal-anchor for type II membrane protein span at residues 12-32; the sequence is FLIVCIILGCFMACLLIYIKP. The Lumenal portion of the chain corresponds to 33–359; that stretch reads TNSWIFSPME…VGNLEKWFWN (327 aa). Asn-62 carries an N-linked (GlcNAc...) asparagine glycan. The tract at residues 63–168 is acceptor-binding; the sequence is ETTILIWVWP…RRDSDIQVPY (106 aa). Gln-75 contributes to the a beta-D-galactosyl-(1-&gt;4)-N-acetyl-beta-D-glucosaminyl derivative binding site. Cystine bridges form between Cys-82–Cys-335, Cys-91–Cys-338, and Cys-190–Cys-238. The N-linked (GlcNAc...) asparagine glycan is linked to Asn-101. An a beta-D-galactosyl-(1-&gt;4)-N-acetyl-beta-D-glucosaminyl derivative-binding site is contributed by Glu-137. Glu-137 serves as the catalytic Nucleophile. Glu-137 lines the GDP-beta-L-fucose pocket. Asn-153 is a glycosylation site (N-linked (GlcNAc...) asparagine). GDP-beta-L-fucose is bound by residues Tyr-168, Val-192, Ser-194, Asn-195, Arg-202, Val-226, Tyr-241, Asn-246, Tyr-252, Glu-255, and Lys-256. The tract at residues 169–326 is donor-binding; the sequence is GFLTVSTNPF…NWRKDFTVNL (158 aa). An acceptor-binding region spans residues 327 to 359; that stretch reads PRFWESHACLACDHVKRHQEYKSVGNLEKWFWN.

The protein belongs to the glycosyltransferase 10 family. In terms of assembly, homodimer. In terms of processing, N-glycosylated with complex-type N-glycans.

The protein resides in the golgi apparatus. Its subcellular location is the trans-Golgi network membrane. It is found in the golgi apparatus membrane. The enzyme catalyses a beta-D-galactosyl-(1-&gt;4)-N-acetyl-beta-D-glucosaminyl derivative + GDP-beta-L-fucose = a beta-D-galactosyl-(1-&gt;4)-[alpha-L-fucosyl-(1-&gt;3)]-N-acetyl-beta-D-glucosaminyl derivative + GDP + H(+). It catalyses the reaction an alpha-Neu5Ac-(2-&gt;3)-beta-D-Gal-(1-&gt;4)-beta-D-GlcNAc-(1-&gt;3)-beta-D-Gal-(1-&gt;4)-beta-D-GlcNAc derivative + GDP-beta-L-fucose = an alpha-Neu5Ac-(2-&gt;3)-beta-D-Gal-(1-&gt;4)-beta-D-GlcNAc-(1-&gt;3)-beta-D-Gal-(1-&gt;4)-[alpha-L-Fuc-(1-&gt;3)]-beta-D-GlcNAc derivative + GDP + H(+). It carries out the reaction alpha-N-glycoloylneuraminosyl-(2-&gt;3)-beta-D-galactosyl-(1-&gt;4)-N-acetyl-beta-D-glucosaminyl-(1-&gt;3)-beta-D-galactosyl-(1-&gt;4)-N-acetyl-beta-D-glucosaminyl-(1-&gt;3)-beta-D-galactosyl-(1-&gt;4)-beta-D-glucosyl-(1&lt;-&gt;1')-ceramide + GDP-beta-L-fucose = alpha-N-glycoloylneuraminosyl-(2-&gt;3)-beta-D-galactosyl-(1-&gt;4)-N-acetyl-beta-D-glucosaminyl-(1-&gt;3)-beta-D-galactosyl-(1-&gt;4)-[alpha-L-fucosyl-(1-&gt;3)]-N-acetyl-beta-D-glucosaminyl-(1-&gt;3)-beta-D-galactosyl-(1-&gt;4)-beta-D-glucosyl-(1&lt;-&gt;1')-ceramide + GDP + H(+). The catalysed reaction is alpha-D-galactosyl-(1-&gt;3)-beta-D-galactosyl-(1-&gt;4)-N-acetyl-beta-D-glucosaminyl-(1-&gt;3)-beta-D-galactosyl-(1-&gt;4)-beta-D-glucosyl-(1&lt;-&gt;1')-ceramide + GDP-beta-L-fucose = a neolactoside IV(3)-alpha-Gal,III(3)-alpha-Fuc-nLc4Cer + GDP + H(+). The enzyme catalyses a neolactoside nLc4Cer + GDP-beta-L-fucose = a neolactoside III(3)-alpha-Fuc-nLc4Cer + GDP + H(+). It catalyses the reaction an N-acetyl-alpha-neuraminyl-(2-&gt;3)-beta-D-galactosyl-(1-&gt;4)-N-acetyl-beta-D-glucosaminyl derivative + GDP-beta-L-fucose = an alpha-Neu5Ac-(2-&gt;3)-beta-D-Gal-(1-&gt;4)-[alpha-L-Fuc-(1-&gt;3)]-beta-D-GlcNAc derivative + GDP + H(+). It carries out the reaction beta-D-Gal-(1-&gt;4)-beta-D-GlcNAc-(1-&gt;3)-beta-D-Gal-(1-&gt;4)-D-Glc + GDP-beta-L-fucose = beta-D-Gal-(1-&gt;4)-[alpha-L-Fuc-(1-&gt;3)]-beta-D-GlcNAc-(1-&gt;3)-beta-D-Gal-(1-&gt;4)-D-Glc + GDP + H(+). The catalysed reaction is an alpha-L-Fuc-(1-&gt;2)-beta-D-Gal-(1-&gt;4)-beta-D-GlcNAc derivative + GDP-beta-L-fucose = an alpha-L-Fuc-(1-&gt;2)-beta-D-Gal-(1-&gt;4)-[alpha-L-Fuc-(1-&gt;3)]-beta-D-GlcNAc derivative + GDP + H(+). The protein operates within protein modification; protein glycosylation. It participates in glycolipid biosynthesis. Its activity is regulated as follows. Activated by Mn2+. Its function is as follows. Catalyzes alpha(1-&gt;3) linkage of fucosyl moiety transferred from GDP-beta-L-fucose to N-acetyl glucosamine (GlcNAc) within type 2 lactosamine (LacNAc, beta-D-Gal-(1-&gt;4)-beta-D-GlcNAc-) glycan attached to glycolipids and N- or O-linked glycoproteins. Fucosylates distal type 2 LacNAc and its fucosylated (H-type 2 LacNAc) and sialylated (sialyl-type 2 LacNAc) derivatives to form Lewis x (Lex) (CD15) and Lewis y (Ley) antigenic epitopes involved in cell adhesion and differentiation. Generates Lex epitopes in the brain, presumably playing a role in the maintenance of neuronal stemness and neurite outgrowth in progenitor neural cells. Fucosylates the internal type 2 LacNAc unit of the polylactosamine chain to form VIM-2 antigen that serves as recognition epitope for SELE. Can also modify milk oligosaccharides in particular type 2 tetrasaccharide LNnT. The sequence is that of 4-galactosyl-N-acetylglucosaminide 3-alpha-L-fucosyltransferase 9 from Canis lupus familiaris (Dog).